We begin with the raw amino-acid sequence, 117 residues long: UPF0251 protein cbdbA217 (117 aa).

It belongs to the UPF0251 family.

This Dehalococcoides mccartyi (strain CBDB1) protein is UPF0251 protein cbdbA217.